The sequence spans 306 residues: D-alanine--D-alanine ligase (306 aa).

Positions 102–300 (KIIAANAGVC…YGDIVQWMVE (199 aa)) constitute an ATP-grasp domain. 128-183 (PMEPPYVIKPVCEGSSFGVVIVQENEAVPPHNIGGSEWGYADEVMVEKYIPGRELT) provides a ligand contact to ATP. Mg(2+) contacts are provided by aspartate 253, glutamate 267, and asparagine 269.

This sequence belongs to the D-alanine--D-alanine ligase family. The cofactor is Mg(2+). Mn(2+) serves as cofactor.

Its subcellular location is the cytoplasm. It catalyses the reaction 2 D-alanine + ATP = D-alanyl-D-alanine + ADP + phosphate + H(+). Its pathway is cell wall biogenesis; peptidoglycan biosynthesis. Functionally, cell wall formation. The sequence is that of D-alanine--D-alanine ligase from Bartonella tribocorum (strain CIP 105476 / IBS 506).